Here is a 92-residue protein sequence, read N- to C-terminus: Small ribosomal subunit protein uS19c (92 aa).

This sequence belongs to the universal ribosomal protein uS19 family.

Its subcellular location is the plastid. The protein localises to the chloroplast. Protein S19 forms a complex with S13 that binds strongly to the 16S ribosomal RNA. The chain is Small ribosomal subunit protein uS19c from Physcomitrium patens (Spreading-leaved earth moss).